A 588-amino-acid polypeptide reads, in one-letter code: Transmembrane protein 201 homolog (588 aa).

The Nuclear segment spans residues 1 to 212; sequence MEVAAAVGVI…FFFAGGSTCE (212 aa). Residues 213–233 form a helical membrane-spanning segment; the sequence is ALHFGCLISSIILFLANIDFL. At 234 to 254 the chain is on the perinuclear space side; the sequence is QQDAGASLINLPKALQDILPE. Residues 255 to 275 form a helical membrane-spanning segment; the sequence is VYKYSFVINFLIFTTHLIAAF. The Nuclear segment spans residues 276 to 280; that stretch reads NNKCR. The chain crosses the membrane as a helical span at residues 281-301; sequence VTLPDLLLPILLILAMLTVLT. The Perinuclear space portion of the chain corresponds to 302–309; it reads SSDNLSQD. The helical transmembrane segment at 310–330 threads the bilayer; the sequence is VALVRGACASFSTILSMAVTL. Topologically, residues 331 to 564 are nuclear; the sequence is LPRKKLHKKR…SGAWQCRVIG (234 aa). A disordered region spans residues 378-457; sequence RRSPHTPSAS…QSTRSSHFKP (80 aa). Over residues 384 to 396 the composition is skewed to low complexity; sequence PSASPPAMNSSPP. Polar residues-rich tracts occupy residues 418-430 and 441-452; these read NMQS…NNHV and MAAQSVAQSTRS. The chain crosses the membrane as a helical span at residues 565–585; the sequence is ILFALVFIVLIMQIGLFYVLF. The Perinuclear space portion of the chain corresponds to 586 to 588; that stretch reads TRN.

The protein belongs to the TMEM201 family.

It localises to the nucleus inner membrane. Plays a role in nuclear migration in hypodermal cells. This Caenorhabditis elegans protein is Transmembrane protein 201 homolog.